The chain runs to 130 residues: Transcription antitermination protein NusB (130 aa).

The protein belongs to the NusB family.

Its function is as follows. Involved in transcription antitermination. Required for transcription of ribosomal RNA (rRNA) genes. Binds specifically to the boxA antiterminator sequence of the ribosomal RNA (rrn) operons. The sequence is that of Transcription antitermination protein NusB from Bacillus anthracis (strain A0248).